A 191-amino-acid polypeptide reads, in one-letter code: Cathelicidin-related antimicrobial peptide Na_CRAMP (191 aa).

A signal peptide spans 1–22; sequence MEGFFWKTLLVVGALTISGTSS. A propeptide spanning residues 23–161 is cleaved from the precursor; the sequence is FPHKPLTYEE…DQPKRVKRFK (139 aa). Intrachain disulfides connect cysteine 81–cysteine 92 and cysteine 103–cysteine 120. The disordered stretch occupies residues 126 to 154; the sequence is EEEQKQEEGNEEEKEVEKEEKEEDQKDQP. Basic and acidic residues predominate over residues 140–154; the sequence is EVEKEEKEEDQKDQP.

It belongs to the cathelicidin family. Expressed by the venom gland.

It is found in the secreted. It localises to the target cell membrane. Its function is as follows. Potent antimicrobial peptide against most of Gram-negative bacteria, some Gram-positive bacteria (Bacillus) and some fungi. Adopts an amphipathic alpha helical conformation, that may allow to partition into the target membrane. No hemolytic and cytotoxic activities have been observed on mammalian cells. This Naja atra (Chinese cobra) protein is Cathelicidin-related antimicrobial peptide Na_CRAMP.